A 177-amino-acid polypeptide reads, in one-letter code: Novel acetylcholine receptor chaperone (177 aa).

Residues 1–5 (MASPR) lie on the Cytoplasmic side of the membrane. A helical transmembrane segment spans residues 6-26 (TVTVVALSVALGLFFVFMGTI). Over 27 to 61 (KLTPRLSKDAYSEMKRAYKSYVRALPLLKKMGINS) the chain is Lumenal. Residues 43-54 (AYKSYVRALPLL) are interaction with NGFR. The chain crosses the membrane as a helical span at residues 62-82 (ILLRKSIGALEVACGIVMTLV). The Cytoplasmic portion of the chain corresponds to 83–88 (PGRPKD). A helical membrane pass occupies residues 89–109 (VANFFLLLLVLAVLFFHQLVG). At 110-114 (DPLKR) the chain is on the lumenal side. The chain crosses the membrane as a helical span at residues 115 to 132 (YAHALVFGILLTCRLLIA). Residues 133–177 (RKPEDRSSEKKSSPPGNAGSDGNAGNTEEQPSLYEKAPQGKMKLS) lie on the Cytoplasmic side of the membrane. The segment at 136 to 177 (EDRSSEKKSSPPGNAGSDGNAGNTEEQPSLYEKAPQGKMKLS) is disordered.

The protein belongs to the DoxX family. In terms of assembly, may interact with NGFR. Interacts with RPN1, RPN2 and CANX.

The protein resides in the peroxisome membrane. It is found in the cytoplasmic vesicle. Its subcellular location is the endoplasmic reticulum membrane. Functionally, molecular chaperone which mediates the proper assembly and functional expression of the nicotinic acetylcholine receptors (nAChRs) throughout the brain. Essential for the proper folding, assembly, function and surface trafficking of alpha-7 (CHRNA7), alpha-4-beta-2, alpha-3-beta-2 and alpha-3-beta-4 receptors. Stably associates with ribophorin-1 (RPN1) and ribophorin-2 (RPN2) (components of the oligosaccharyl transferase (OST) complex) and with calnexin (CANX), both of which are critical for NACHO-mediated effects on CHRNA7 assembly and function. Facilitates the proper folding and assembly of alpha-6-beta-2 and alpha-6-beta-2-beta-3 receptors and acts at early stages of the nAChRs subunit assembly. Promotes the expression of the alpha-4(2):beta-2(3) stoichiometric form over the alpha-4(3):beta-2(2) form. In Bos taurus (Bovine), this protein is Novel acetylcholine receptor chaperone (TMEM35A).